A 159-amino-acid chain; its full sequence is NADH-quinone oxidoreductase subunit B (159 aa).

Residues C37, C38, C102, and C132 each coordinate [4Fe-4S] cluster.

The protein belongs to the complex I 20 kDa subunit family. NDH-1 is composed of 14 different subunits. Subunits NuoB, C, D, E, F, and G constitute the peripheral sector of the complex. [4Fe-4S] cluster is required as a cofactor.

The protein localises to the cell inner membrane. It catalyses the reaction a quinone + NADH + 5 H(+)(in) = a quinol + NAD(+) + 4 H(+)(out). Functionally, NDH-1 shuttles electrons from NADH, via FMN and iron-sulfur (Fe-S) centers, to quinones in the respiratory chain. Couples the redox reaction to proton translocation (for every two electrons transferred, four hydrogen ions are translocated across the cytoplasmic membrane), and thus conserves the redox energy in a proton gradient. The polypeptide is NADH-quinone oxidoreductase subunit B (Paraburkholderia phymatum (strain DSM 17167 / CIP 108236 / LMG 21445 / STM815) (Burkholderia phymatum)).